Here is a 478-residue protein sequence, read N- to C-terminus: Proline--tRNA ligase (478 aa).

Belongs to the class-II aminoacyl-tRNA synthetase family. ProS type 3 subfamily. In terms of assembly, homodimer.

It localises to the cytoplasm. The enzyme catalyses tRNA(Pro) + L-proline + ATP = L-prolyl-tRNA(Pro) + AMP + diphosphate. Catalyzes the attachment of proline to tRNA(Pro) in a two-step reaction: proline is first activated by ATP to form Pro-AMP and then transferred to the acceptor end of tRNA(Pro). The polypeptide is Proline--tRNA ligase (Oceanobacillus iheyensis (strain DSM 14371 / CIP 107618 / JCM 11309 / KCTC 3954 / HTE831)).